Reading from the N-terminus, the 260-residue chain is Snake venom serine protease homolog KN4 (260 aa).

The signal sequence occupies residues 1 to 18; it reads MVLIRVLANLLILQLSYA. A propeptide spanning residues 19 to 24 is cleaved from the precursor; sequence QKSSEL. In terms of domain architecture, Peptidase S1 spans 25-251; it reads IIGGDECNIN…HLDWIQNIIA (227 aa). Cystine bridges form between Cys31–Cys165, Cys52–Cys68, Cys100–Cys258, Cys144–Cys212, Cys176–Cys191, and Cys202–Cys227. 5 N-linked (GlcNAc...) asparagine glycosylation sites follow: Asn83, Asn123, Asn124, Asn156, and Asn172. A glycan (N-linked (GlcNAc...) asparagine) is linked at Asn253.

The protein belongs to the peptidase S1 family. Snake venom subfamily. As to expression, expressed by the venom gland.

The protein resides in the secreted. Functionally, snake venom serine protease homolog that may act in the hemostasis system of the prey. The chain is Snake venom serine protease homolog KN4 from Trimeresurus stejnegeri (Chinese green tree viper).